Here is a 335-residue protein sequence, read N- to C-terminus: Phosphate acyltransferase (335 aa).

This sequence belongs to the PlsX family. In terms of assembly, homodimer. Probably interacts with PlsY.

It localises to the cytoplasm. The enzyme catalyses a fatty acyl-[ACP] + phosphate = an acyl phosphate + holo-[ACP]. It functions in the pathway lipid metabolism; phospholipid metabolism. Functionally, catalyzes the reversible formation of acyl-phosphate (acyl-PO(4)) from acyl-[acyl-carrier-protein] (acyl-ACP). This enzyme utilizes acyl-ACP as fatty acyl donor, but not acyl-CoA. The chain is Phosphate acyltransferase from Heliobacterium modesticaldum (strain ATCC 51547 / Ice1).